Reading from the N-terminus, the 151-residue chain is Cysteine protease inhibitor 5 (151 aa).

Cystine bridges form between cysteine 13/cysteine 65 and cysteine 114/cysteine 120.

Belongs to the protease inhibitor I3 (leguminous Kunitz-type inhibitor) family.

It localises to the vacuole. Functionally, inhibitor of cysteine proteases. May protect the plant by inhibiting proteases of invading organisms. This Solanum tuberosum (Potato) protein is Cysteine protease inhibitor 5.